The sequence spans 61 residues: UPF0391 membrane protein Pnap_0032 (61 aa).

2 helical membrane passes run 5–25 (AIIF…GVAA) and 33–53 (VLFG…ALGV).

This sequence belongs to the UPF0391 family.

It is found in the cell membrane. The polypeptide is UPF0391 membrane protein Pnap_0032 (Polaromonas naphthalenivorans (strain CJ2)).